The primary structure comprises 431 residues: Tol-Pal system protein TolB (431 aa).

The N-terminal stretch at 1 to 26 (MRLMTKLGFRALVASCLIAAGGAANA) is a signal peptide. A disordered region spans residues 411 to 431 (PQILSVQGGSVREPSWGPFMQ).

This sequence belongs to the TolB family. As to quaternary structure, the Tol-Pal system is composed of five core proteins: the inner membrane proteins TolA, TolQ and TolR, the periplasmic protein TolB and the outer membrane protein Pal. They form a network linking the inner and outer membranes and the peptidoglycan layer.

The protein resides in the periplasm. Functionally, part of the Tol-Pal system, which plays a role in outer membrane invagination during cell division and is important for maintaining outer membrane integrity. This chain is Tol-Pal system protein TolB, found in Burkholderia ambifaria (strain MC40-6).